A 157-amino-acid polypeptide reads, in one-letter code: Peptide methionine sulfoxide reductase MsrA (157 aa).

The active site involves Cys10.

It belongs to the MsrA Met sulfoxide reductase family.

It catalyses the reaction L-methionyl-[protein] + [thioredoxin]-disulfide + H2O = L-methionyl-(S)-S-oxide-[protein] + [thioredoxin]-dithiol. The catalysed reaction is [thioredoxin]-disulfide + L-methionine + H2O = L-methionine (S)-S-oxide + [thioredoxin]-dithiol. Has an important function as a repair enzyme for proteins that have been inactivated by oxidation. Catalyzes the reversible oxidation-reduction of methionine sulfoxide in proteins to methionine. This chain is Peptide methionine sulfoxide reductase MsrA, found in Clostridium botulinum (strain Hall / ATCC 3502 / NCTC 13319 / Type A).